The primary structure comprises 282 residues: uncharacterized protein (282 aa).

Residues D5–D140 form the N-acetyltransferase domain.

It belongs to the acetyltransferase family.

This is an uncharacterized protein from Bacillus subtilis (strain 168).